Here is a 432-residue protein sequence, read N- to C-terminus: Adenylosuccinate synthetase (432 aa).

GTP is bound by residues 13-19 and 41-43; these read GDEGKGK and GHT. Asp14 serves as the catalytic Proton acceptor. Residues Asp14 and Gly41 each contribute to the Mg(2+) site. IMP contacts are provided by residues 14–17, 39–42, Thr130, Arg144, Gln225, Thr240, and Arg304; these read DEGK and NAGH. His42 acts as the Proton donor in catalysis. 300–306 is a binding site for substrate; sequence ATTGRRR. GTP contacts are provided by residues Arg306, 332–334, and 415–417; these read KLD and STG.

It belongs to the adenylosuccinate synthetase family. As to quaternary structure, homodimer. It depends on Mg(2+) as a cofactor.

The protein localises to the cytoplasm. It catalyses the reaction IMP + L-aspartate + GTP = N(6)-(1,2-dicarboxyethyl)-AMP + GDP + phosphate + 2 H(+). The protein operates within purine metabolism; AMP biosynthesis via de novo pathway; AMP from IMP: step 1/2. In terms of biological role, plays an important role in the de novo pathway of purine nucleotide biosynthesis. Catalyzes the first committed step in the biosynthesis of AMP from IMP. This Salmonella paratyphi C (strain RKS4594) protein is Adenylosuccinate synthetase.